Here is a 286-residue protein sequence, read N- to C-terminus: Beta-lactamase TEM (286 aa).

A signal peptide spans 1 to 23 (MSIQHFRVALIPFFAAFCLPVFA). Residue S68 is the Acyl-ester intermediate of the active site. A disulfide bridge connects residues C75 and C121. Residue E166 is the Proton acceptor of the active site. 232 to 234 (KSG) serves as a coordination point for substrate.

It belongs to the class-A beta-lactamase family.

The enzyme catalyses a beta-lactam + H2O = a substituted beta-amino acid. In terms of biological role, TEM-type are the most prevalent beta-lactamases in enterobacteria; they hydrolyze the beta-lactam bond in susceptible beta-lactam antibiotics, thus conferring resistance to penicillins and cephalosporins. TEM-3 and TEM-4 are capable of hydrolyzing cefotaxime and ceftazidime. TEM-5 is capable of hydrolyzing ceftazidime. TEM-6 is capable of hydrolyzing ceftazidime and aztreonam. TEM-8/CAZ-2, TEM-16/CAZ-7 and TEM-24/CAZ-6 are markedly active against ceftazidime. IRT-4 shows resistance to beta-lactamase inhibitors. This Escherichia coli protein is Beta-lactamase TEM (bla).